Reading from the N-terminus, the 746-residue chain is Probable ubiquitin carboxyl-terminal hydrolase MINDY-4 (746 aa).

Disordered regions lie at residues 123–179, 198–254, and 319–342; these read DDET…SEGE, MALG…IKGE, and GKGA…FSNM. Composition is skewed to polar residues over residues 141–152 and 165–174; these read YRSQNDLQFNKS and TEAGVTSTGV. The active-site Nucleophile is cysteine 448. Histidine 666 acts as the Proton acceptor in catalysis.

Belongs to the MINDY deubiquitinase family. FAM188 subfamily.

It carries out the reaction Thiol-dependent hydrolysis of ester, thioester, amide, peptide and isopeptide bonds formed by the C-terminal Gly of ubiquitin (a 76-residue protein attached to proteins as an intracellular targeting signal).. Probable hydrolase that can remove 'Lys-48'-linked conjugated ubiquitin from proteins. The chain is Probable ubiquitin carboxyl-terminal hydrolase MINDY-4 (mindy4) from Xenopus tropicalis (Western clawed frog).